We begin with the raw amino-acid sequence, 160 residues long: Ribosomal RNA large subunit methyltransferase H (160 aa).

Residues leucine 76, glycine 108, and 127 to 132 each bind S-adenosyl-L-methionine; that span reads FGFMTW.

This sequence belongs to the RNA methyltransferase RlmH family. Homodimer.

The protein localises to the cytoplasm. It catalyses the reaction pseudouridine(1915) in 23S rRNA + S-adenosyl-L-methionine = N(3)-methylpseudouridine(1915) in 23S rRNA + S-adenosyl-L-homocysteine + H(+). Its function is as follows. Specifically methylates the pseudouridine at position 1915 (m3Psi1915) in 23S rRNA. The sequence is that of Ribosomal RNA large subunit methyltransferase H from Bartonella henselae (strain ATCC 49882 / DSM 28221 / CCUG 30454 / Houston 1) (Rochalimaea henselae).